A 384-amino-acid polypeptide reads, in one-letter code: S-adenosylmethionine synthase (384 aa).

Residue His-15 coordinates ATP. Asp-17 serves as a coordination point for Mg(2+). Glu-43 serves as a coordination point for K(+). The L-methionine site is built by Glu-56 and Gln-99. A flexible loop region spans residues 99 to 109; the sequence is QSPDINQGVDR. Residues 164–166, 230–231, Asp-239, 245–246, Ala-262, and Lys-266 each bind ATP; these read DAK, RF, and RK. L-methionine is bound at residue Asp-239. An L-methionine-binding site is contributed by Lys-270.

The protein belongs to the AdoMet synthase family. In terms of assembly, homotetramer; dimer of dimers. Mg(2+) is required as a cofactor. Requires K(+) as cofactor.

It is found in the cytoplasm. It carries out the reaction L-methionine + ATP + H2O = S-adenosyl-L-methionine + phosphate + diphosphate. It functions in the pathway amino-acid biosynthesis; S-adenosyl-L-methionine biosynthesis; S-adenosyl-L-methionine from L-methionine: step 1/1. Functionally, catalyzes the formation of S-adenosylmethionine (AdoMet) from methionine and ATP. The overall synthetic reaction is composed of two sequential steps, AdoMet formation and the subsequent tripolyphosphate hydrolysis which occurs prior to release of AdoMet from the enzyme. This is S-adenosylmethionine synthase from Salmonella arizonae (strain ATCC BAA-731 / CDC346-86 / RSK2980).